Reading from the N-terminus, the 644-residue chain is Threonine--tRNA ligase (644 aa).

In terms of domain architecture, TGS spans 3–64 (EMIRITFPDG…QEDGSISIIT (62 aa)). The tract at residues 245-542 (DHRKLGKELE…LIEEYKGAFP (298 aa)) is catalytic. Zn(2+) is bound by residues Cys338, His389, and His519.

This sequence belongs to the class-II aminoacyl-tRNA synthetase family. Homodimer. Zn(2+) is required as a cofactor.

Its subcellular location is the cytoplasm. The enzyme catalyses tRNA(Thr) + L-threonine + ATP = L-threonyl-tRNA(Thr) + AMP + diphosphate + H(+). Functionally, catalyzes the attachment of threonine to tRNA(Thr) in a two-step reaction: L-threonine is first activated by ATP to form Thr-AMP and then transferred to the acceptor end of tRNA(Thr). Also edits incorrectly charged L-seryl-tRNA(Thr). This is Threonine--tRNA ligase from Geobacillus sp. (strain WCH70).